Consider the following 233-residue polypeptide: Methyltransferase srdJ (233 aa).

The disordered stretch occupies residues 1 to 32 (MFQVQTAGTRTGTSSPDTTTSEAGLGSTPPMP). Positions 9–21 (TRTGTSSPDTTTS) are enriched in low complexity. Positions 40, 52, and 81 each coordinate S-adenosyl-L-methionine. Residues 140–146 (EISSQKY) carry the Required for methyltransferase activity motif.

This sequence belongs to the methyltransferase superfamily.

In terms of biological role, methyltransferase; part of the gene cluster that mediates the biosynthesis of sordarial, a salicylic aldehyde structurally related to the phytotoxin pyriculol. The most interesting aspect of this pathway is formation of an aromatic product from the highly reducing polyketide synthase srdA. SrdA synthesizes a reduced polyketide chain from one molecule of acetyl-CoA and five molecules of malonyl-CoA. The polyketide chain is then reductively released as an aldehyde. The oxidoreductases srdC, srdD and srdE then oxidize one of the hydroxy groups to facilitate the intramolecular aldol condensation, followed by dehydration to yield a salicylic aldehyde. This aldehyde can undergo facile reduction by endogenous reductases to yield the alcohol 1-hydroxy-2-hydroxymethyl-3-pent-1,3-dienylbenzene. The flavin-dependent srdI counteract against the propensity of the aldehydes to be reduced under physiological conditions and is responsible for reoxidizing 1-hydroxy-2-hydroxymethyl-3-pent-1,3-dienylbenzene back to the salicylic aldehyde. This salicylic aldehyde is then selectively epoxidized by the cupin-domain-containing oxidoreductase srdB to yield the epoxide, which can be hydrolyzed stereoselectively by the hydrolase srdG to give the final product sordarial. The polypeptide is Methyltransferase srdJ (Neurospora crassa (strain ATCC 24698 / 74-OR23-1A / CBS 708.71 / DSM 1257 / FGSC 987)).